The primary structure comprises 430 residues: Evolutionarily conserved signaling intermediate in Toll pathway, mitochondrial (430 aa).

The transit peptide at 1–48 directs the protein to the mitochondrion; the sequence is MSWVQATLLARGLCRAWGGICRAALPGTSISQVPRQLPRGLHCSAAPH. The segment at 41–66 is disordered; the sequence is LHCSAAPHSSEQSLVSSPPEPRQRPT. Over residues 47-56 the composition is skewed to polar residues; sequence PHSSEQSLVS. Residue Lys-372 forms a Glycyl lysine isopeptide (Lys-Gly) (interchain with G-Cter in ubiquitin) linkage. The segment at 400–430 is disordered; sequence LHTSSAGLEEPPPPEDHEEDDSRQRQQQGQS. Residues 411 to 420 are compositionally biased toward acidic residues; the sequence is PPPEDHEEDD.

Belongs to the ECSIT family. Interacts with MAP3K1, SMAD4 and TRAF6. Interacts with SMAD1 only after BMP4-treatment. Part of the mitochondrial complex I assembly/MCIA complex that comprises at least the core subunits TMEM126B, NDUFAF1, ECSIT and ACAD9 and complement subunits such as COA1 and TMEM186. Interacts with NDUFAF1. Interacts with ACAD9. Interacts with TRIM59. Interacts with TMEM70 and TMEM242. Interacts (when ubiquitinated) with NF-kappa-B subunits RELA and NFKB1. Interacts with RIGI, IFIT1 and MAVS; these interactions promote RLR-mediated type I IFN induction. Interacts with SQSTM1; this interaction inhibits TLR4 signaling via functional regulation of the TRAF6-ECSIT complex. Interacts with cereblon/CRBN; this interaction inhibits the ubiquitination of ECSIT. Post-translationally, ubiquitinated on Lys-372; leading to translocation in the nucleus together with RELA and NFKB1 and expression of NF-kappa-B-dependent genes.

The protein localises to the cytoplasm. It is found in the nucleus. The protein resides in the mitochondrion. Adapter protein that plays a role in different signaling pathways including TLRs and IL-1 pathways or innate antiviral induction signaling. Plays a role in the activation of NF-kappa-B by forming a signal complex with TRAF6 and TAK1/MAP3K7 to activate TAK1/MAP3K7 leading to activation of IKKs. Once ubiquitinated, interacts with the dissociated RELA and NFKB1 proteins and translocates to the nucleus where it induces NF-kappa-B-dependent gene expression. Plays a role in innate antiviral immune response by bridging the pattern recognition receptors RIGI and MDA5/IFIT1 to the MAVS complex at the mitochondrion. Promotes proteolytic activation of MAP3K1. Involved in the BMP signaling pathway. Required for normal embryonic development. In terms of biological role, as part of the MCIA complex, involved in the assembly of the mitochondrial complex I. In Macaca fascicularis (Crab-eating macaque), this protein is Evolutionarily conserved signaling intermediate in Toll pathway, mitochondrial.